The primary structure comprises 189 residues: uncharacterized protein (189 aa).

Transmembrane regions (helical) follow at residues 4–21 (AISTVLYVLIPFLVFLFR), 34–56 (AFYPFHLFLPMIVVFITGIPLIL), 79–101 (LLVIDTMLFQIMLLQPFITLIYS), 122–144 (RILSSLFAFVIAGIALPEIVLLN), and 148–170 (ILHVDYLFFVHLIASSVFANLLV).

Its subcellular location is the cell membrane. This is an uncharacterized protein from Archaeoglobus fulgidus (strain ATCC 49558 / DSM 4304 / JCM 9628 / NBRC 100126 / VC-16).